Consider the following 923-residue polypeptide: DNA mismatch repair protein PMS1 (923 aa).

Basic and acidic residues-rich tracts occupy residues D543 to L553, N565 to E581, and G591 to P601. Residues D543–C603 are disordered.

Belongs to the DNA mismatch repair MutL/HexB family. As to quaternary structure, heterodimer of MLH1 and PMS1, called MutLalpha, which is the major MMR MutL activity correcting base-base mismatches as well as IDLs. The heterodimer binds double strand DNA independently of a mismatch with positive cooperativity and has more than one DNA binding site. Forms a ternary complex with either the MSH2-MSH6 (MutSalpha) or the MSH2-MSH3 heterodimer (MutSbeta), which recognize and bind to mismatch DNA. Ternary complex formation is promoted by ATP binding. In terms of tissue distribution, expressed at very low levels in mature leaves. Detected in rapidly dividing tissues.

It is found in the nucleus. Its function is as follows. Required for DNA mismatch repair (MMR), correcting base-base mismatches and insertion-deletion loops (IDLs) resulting from DNA replication, DNA damage or from recombination events between non-identical sequences during meiosis. Component of the MutLalpha heterodimer that forms a ternary complex with the MutS heterodimers, which initially recognize the DNA mismatches. This complex is thought to be responsible for directing the downstream MMR events, including strand discrimination, excision, and resynthesis. Plays a major role in maintaining the genetic stability of simple sequence repeats and in the repair of heteroduplex sites present in meiotic recombination intermediates. Does not seem to be required for homologous somatic recombination. The chain is DNA mismatch repair protein PMS1 (PMS1) from Arabidopsis thaliana (Mouse-ear cress).